The following is a 606-amino-acid chain: NADH-ubiquinone oxidoreductase chain 5 (606 aa).

The next 16 helical transmembrane spans lie at 1–21, 43–63, 88–108, 117–137, 140–160, 171–191, 209–229, 241–261, 273–293, 310–330, 366–386, 413–433, 457–477, 488–508, 513–533, and 582–602; these read MNLF…PIIM, AFII…EAII, IFIP…MWYM, FFKY…ANNL, LFIG…WWYG, AILY…WFLT, LNIP…QFGL, TPVS…FLLI, MQTL…ICAL, LGLM…LHIC, MPFT…MPFL, LIAT…VLLG, LLIG…PTTI, LTAL…NLAA, FMYP…PIVM, and GLVK…LILL.

Belongs to the complex I subunit 5 family. In terms of assembly, core subunit of respiratory chain NADH dehydrogenase (Complex I) which is composed of 45 different subunits.

It is found in the mitochondrion inner membrane. It catalyses the reaction a ubiquinone + NADH + 5 H(+)(in) = a ubiquinol + NAD(+) + 4 H(+)(out). In terms of biological role, core subunit of the mitochondrial membrane respiratory chain NADH dehydrogenase (Complex I) which catalyzes electron transfer from NADH through the respiratory chain, using ubiquinone as an electron acceptor. Essential for the catalytic activity and assembly of complex I. This Felis catus (Cat) protein is NADH-ubiquinone oxidoreductase chain 5 (MT-ND5).